The chain runs to 361 residues: Probable cadicidin biosynthesis thioesterase (361 aa).

The 4Fe-4S ferredoxin-type domain maps to 2–29 (RVTVDSEQCVGAGQCVLNAPEVFDQDDD). The segment at 36-110 (RADPTSGTTR…RRDSPVTTAD (75 aa)) is disordered. The span at 46–61 (RSARRATCARRPRSSS) shows a compositional bias: basic residues. Basic and acidic residues-rich tracts occupy residues 62–74 (RRTEPAGCADRHR) and 94–104 (TDRRQNHRRDS). Residue S201 is part of the active site.

It belongs to the thioesterase family.

It functions in the pathway antibiotic biosynthesis; candicidin biosynthesis. In terms of biological role, probable thioesterase involved in the biosynthesis of candicidin. Could release the macrolide ring from the polyketide synthase. This Streptomyces griseus protein is Probable cadicidin biosynthesis thioesterase.